A 453-amino-acid chain; its full sequence is Cytochrome b-c1 complex subunit 2, mitochondrial (453 aa).

The transit peptide at Met1–Tyr14 directs the protein to the mitochondrion. 3 positions are modified to N6-acetyllysine: Lys66, Lys199, and Lys250.

The protein belongs to the peptidase M16 family. UQCRC2/QCR2 subfamily. As to quaternary structure, component of the ubiquinol-cytochrome c oxidoreductase (cytochrome b-c1 complex, complex III, CIII), a multisubunit enzyme composed of 11 subunits. The complex is composed of 3 respiratory subunits cytochrome b, cytochrome c1 and Rieske protein UQCRFS1, 2 core protein subunits UQCRC1/QCR1 and UQCRC2/QCR2, and 6 low-molecular weight protein subunits UQCRH/QCR6, UQCRB/QCR7, UQCRQ/QCR8, UQCR10/QCR9, UQCR11/QCR10 and subunit 9, the cleavage product of Rieske protein UQCRFS1. The complex exists as an obligatory dimer and forms supercomplexes (SCs) in the inner mitochondrial membrane with NADH-ubiquinone oxidoreductase (complex I, CI) and cytochrome c oxidase (complex IV, CIV), resulting in different assemblies (supercomplex SCI(1)III(2)IV(1) and megacomplex MCI(2)III(2)IV(2)). Interacts with RAB5IF. Interacts with STMP1.

The protein resides in the mitochondrion inner membrane. Its function is as follows. Component of the ubiquinol-cytochrome c oxidoreductase, a multisubunit transmembrane complex that is part of the mitochondrial electron transport chain which drives oxidative phosphorylation. The respiratory chain contains 3 multisubunit complexes succinate dehydrogenase (complex II, CII), ubiquinol-cytochrome c oxidoreductase (cytochrome b-c1 complex, complex III, CIII) and cytochrome c oxidase (complex IV, CIV), that cooperate to transfer electrons derived from NADH and succinate to molecular oxygen, creating an electrochemical gradient over the inner membrane that drives transmembrane transport and the ATP synthase. The cytochrome b-c1 complex catalyzes electron transfer from ubiquinol to cytochrome c, linking this redox reaction to translocation of protons across the mitochondrial inner membrane, with protons being carried across the membrane as hydrogens on the quinol. In the process called Q cycle, 2 protons are consumed from the matrix, 4 protons are released into the intermembrane space and 2 electrons are passed to cytochrome c. The 2 core subunits UQCRC1/QCR1 and UQCRC2/QCR2 are homologous to the 2 mitochondrial-processing peptidase (MPP) subunits beta-MPP and alpha-MPP respectively, and they seem to have preserved their MPP processing properties. May be involved in the in situ processing of UQCRFS1 into the mature Rieske protein and its mitochondrial targeting sequence (MTS)/subunit 9 when incorporated into complex III. The chain is Cytochrome b-c1 complex subunit 2, mitochondrial (UQCRC2) from Bos taurus (Bovine).